The following is a 162-amino-acid chain: MRRCSLIATIVELVTAVIEPAITAPFELVDVEYGKIGSDYVLSVFVDKPEGITVNDTADLTDIISPLLDTIKPDPFPEQYFLEVTSPGLERPLKTKEQVEAAVGQYIHVGLYKSLDKQKVFEGTLLQFKEDVLTLEYMDKTRKKEIDIPYSLVSKARLAVKF.

It belongs to the RimP family.

The protein localises to the cytoplasm. Functionally, required for maturation of 30S ribosomal subunits. The protein is Ribosome maturation factor RimP of Streptococcus gordonii (strain Challis / ATCC 35105 / BCRC 15272 / CH1 / DL1 / V288).